Consider the following 188-residue polypeptide: MLTPHNVMAAGEEAPSILLPAVYDIVWSAVVFVVLLVVIWKYALPRVYAMLDGRTEAIAGGIEKAERAQAEADAAKAELTAQLAEARAEAGRIREQARVDATAIAAEIKEQATADAARITASAQQQIEAERQQAVVSLRSEVGSLAIDLASGVIGQSLTDDQRSTALVDRFLADLEASETAGRTGSAS.

The chain crosses the membrane as a helical span at residues 19 to 39 (LPAVYDIVWSAVVFVVLLVVI).

It belongs to the ATPase B chain family. F-type ATPases have 2 components, F(1) - the catalytic core - and F(0) - the membrane proton channel. F(1) has five subunits: alpha(3), beta(3), gamma(1), delta(1), epsilon(1). F(0) has three main subunits: a(1), b(2) and c(10-14). The alpha and beta chains form an alternating ring which encloses part of the gamma chain. F(1) is attached to F(0) by a central stalk formed by the gamma and epsilon chains, while a peripheral stalk is formed by the delta and b chains.

The protein resides in the cell membrane. Functionally, f(1)F(0) ATP synthase produces ATP from ADP in the presence of a proton or sodium gradient. F-type ATPases consist of two structural domains, F(1) containing the extramembraneous catalytic core and F(0) containing the membrane proton channel, linked together by a central stalk and a peripheral stalk. During catalysis, ATP synthesis in the catalytic domain of F(1) is coupled via a rotary mechanism of the central stalk subunits to proton translocation. Its function is as follows. Component of the F(0) channel, it forms part of the peripheral stalk, linking F(1) to F(0). The polypeptide is ATP synthase subunit b (Clavibacter michiganensis subsp. michiganensis (strain NCPPB 382)).